We begin with the raw amino-acid sequence, 454 residues long: MPEFLEDPSVLTKDKLKSELVANNVTLPAGEQRKDVYVQLYLQHLTARNRPPLPAGTNSKGPPDFSSDEEREPTPVLGSGAAAAGRSRAAVGRKATKKTDKPRQEDKDDLDVTELTNEDLLDQLVKYGVNPGPIVGTTRKLYEKKLLKLREQGTESRSSTPLPTISSSAENTRQNGSNDSDRYSDNEEDSKIELKLEKREPLKGRAKTPVTLKQRRVEHNQSYSQAGITETEWTSGSSKGGPLQALTRESTRGSRRTPRKRVETSEHFRIDGPVISESTPIAETIMASSNESLVVNRVTGNFKHASPILPITEFSDIPRRAPKKPLTRAEVGEKTEERRVERDILKEMFPYEASTPTGISASCRRPIKGAAGRPLELSDFRMEESFSSKYVPKYVPLADVKSEKTKKGRSIPVWIKILLFVVVAVFLFLVYQAMETNQVNPFSNFLHVDPRKSN.

A nucleoplasmic region spans residues 1–410 (MPEFLEDPSV…KSEKTKKGRS (410 aa)). Residues 5 to 48 (LEDPSVLTKDKLKSELVANNVTLPAGEQRKDVYVQLYLQHLTAR) form the LEM-like domain. Disordered regions lie at residues 47–117 (ARNR…ELTN) and 149–265 (LREQ…VETS). Positions 49-108 (NRPPLPAGTNSKGPPDFSSDEEREPTPVLGSGAAAAGRSRAAVGRKATKKTDKPRQEDKD) are linker. A Phosphothreonine modification is found at Thr57. Phosphoserine is present on residues Ser59, Ser66, and Ser67. Thr74 is modified (phosphothreonine). Residues 78-93 (GSGAAAAGRSRAAVGR) are compositionally biased toward low complexity. Residue Ser79 is modified to Phosphoserine. Omega-N-methylarginine is present on residues Arg86 and Arg88. Over residues 97 to 106 (KKTDKPRQED) the composition is skewed to basic and acidic residues. Residues 107–117 (KDDLDVTELTN) show a composition bias toward acidic residues. Residues 109–153 (DLDVTELTNEDLLDQLVKYGVNPGPIVGTTRKLYEKKLLKLREQG) enclose the LEM domain. An NAKAP95-binding N region spans residues 138-243 (TRKLYEKKLL…TSGSSKGGPL (106 aa)). Thr154 is subject to Phosphothreonine. Residues 155–178 (ESRSSTPLPTISSSAENTRQNGSN) show a composition bias toward polar residues. Phosphoserine occurs at positions 156 and 159. Phosphothreonine occurs at positions 160 and 164. Phosphoserine occurs at positions 166, 168, 177, 180, 184, and 190. Over residues 179 to 203 (DSDRYSDNEEDSKIELKLEKREPLK) the composition is skewed to basic and acidic residues. Residue Lys207 is modified to N6-acetyllysine. Thr211 carries the post-translational modification Phosphothreonine. Residues 220–237 (NQSYSQAGITETEWTSGS) show a composition bias toward polar residues. A phosphoserine mark is found at Ser222, Ser224, Ser250, Ser254, Ser265, Ser292, and Ser306. A binds lamins B region spans residues 299–371 (TGNFKHASPI…SCRRPIKGAA (73 aa)). An NAKAP95-binding C region spans residues 300–374 (GNFKHASPIL…RPIKGAAGRP (75 aa)). Residue Thr312 is modified to Phosphothreonine. A Phosphoserine modification is found at Ser315. Arg320 bears the Citrulline mark. Residues Ser362, Ser378, and Ser385 each carry the phosphoserine modification. Lys389 carries the post-translational modification N6-acetyllysine. Lys401 participates in a covalent cross-link: Glycyl lysine isopeptide (Lys-Gly) (interchain with G-Cter in SUMO2). The residue at position 402 (Ser402) is a Phosphoserine. Residues 411 to 434 (IPVWIKILLFVVVAVFLFLVYQAM) traverse the membrane as a helical; Signal-anchor for type II membrane protein segment. Residues 435–454 (ETNQVNPFSNFLHVDPRKSN) lie on the Lumenal side of the membrane.

It belongs to the LEM family. As to quaternary structure, interacts with LMNB1, LMNB2, BANF1, AKAP8L, GMCL and chromosomes. Isoform Zeta interacts with BANF1/BAF and may sequester it in the cytoplasm. In terms of processing, mitosis-specific phosphorylation specifically abolishes its binding to lamin B and chromosomes. Citrullinated by PADI4. Expressed in many tissues. Most abundant in adult thymus and fetal liver.

It is found in the nucleus inner membrane. It localises to the cytoplasm. May help direct the assembly of the nuclear lamina and thereby help maintain the structural organization of the nuclear envelope. Possible receptor for attachment of lamin filaments to the inner nuclear membrane. May be involved in the control of initiation of DNA replication through its interaction with NAKAP95. In terms of biological role, thymopoietin (TP) and Thymopentin (TP5) may play a role in T-cell development and function. TP5 is an immunomodulating pentapeptide. The sequence is that of Lamina-associated polypeptide 2, isoforms beta/gamma (TMPO) from Homo sapiens (Human).